A 415-amino-acid chain; its full sequence is tRNA(Ile2) 2-agmatinylcytidine synthetase TiaS (415 aa).

It belongs to the TiaS family.

It localises to the cytoplasm. The catalysed reaction is cytidine(34) in tRNA(Ile2) + agmatine + ATP + H2O = 2-agmatinylcytidine(34) in tRNA(Ile2) + AMP + 2 phosphate + 2 H(+). ATP-dependent agmatine transferase that catalyzes the formation of 2-agmatinylcytidine (agm2C) at the wobble position (C34) of tRNA(Ile2), converting the codon specificity from AUG to AUA. This Pyrobaculum neutrophilum (strain DSM 2338 / JCM 9278 / NBRC 100436 / V24Sta) (Thermoproteus neutrophilus) protein is tRNA(Ile2) 2-agmatinylcytidine synthetase TiaS.